The sequence spans 240 residues: Pyridoxine 5'-phosphate synthase (240 aa).

Asparagine 7 contributes to the 3-amino-2-oxopropyl phosphate binding site. 9–10 (DH) contacts 1-deoxy-D-xylulose 5-phosphate. Arginine 18 provides a ligand contact to 3-amino-2-oxopropyl phosphate. Catalysis depends on histidine 43, which acts as the Proton acceptor. 1-deoxy-D-xylulose 5-phosphate contacts are provided by arginine 45 and histidine 50. Catalysis depends on glutamate 70, which acts as the Proton acceptor. Threonine 100 is a 1-deoxy-D-xylulose 5-phosphate binding site. Histidine 191 (proton donor) is an active-site residue. Residues glycine 192 and 213 to 214 (GH) each bind 3-amino-2-oxopropyl phosphate.

Belongs to the PNP synthase family. Homooctamer; tetramer of dimers.

Its subcellular location is the cytoplasm. It carries out the reaction 3-amino-2-oxopropyl phosphate + 1-deoxy-D-xylulose 5-phosphate = pyridoxine 5'-phosphate + phosphate + 2 H2O + H(+). It participates in cofactor biosynthesis; pyridoxine 5'-phosphate biosynthesis; pyridoxine 5'-phosphate from D-erythrose 4-phosphate: step 5/5. Functionally, catalyzes the complicated ring closure reaction between the two acyclic compounds 1-deoxy-D-xylulose-5-phosphate (DXP) and 3-amino-2-oxopropyl phosphate (1-amino-acetone-3-phosphate or AAP) to form pyridoxine 5'-phosphate (PNP) and inorganic phosphate. This is Pyridoxine 5'-phosphate synthase from Coxiella burnetii (strain Dugway 5J108-111).